Reading from the N-terminus, the 600-residue chain is Elongation factor 4 (600 aa).

Positions 5–187 (KYIRNFSIIA…AIVNKLPPPK (183 aa)) constitute a tr-type G domain. GTP contacts are provided by residues 17–22 (DHGKST) and 134–137 (NKLD).

This sequence belongs to the TRAFAC class translation factor GTPase superfamily. Classic translation factor GTPase family. LepA subfamily.

The protein resides in the cell inner membrane. The enzyme catalyses GTP + H2O = GDP + phosphate + H(+). Functionally, required for accurate and efficient protein synthesis under certain stress conditions. May act as a fidelity factor of the translation reaction, by catalyzing a one-codon backward translocation of tRNAs on improperly translocated ribosomes. Back-translocation proceeds from a post-translocation (POST) complex to a pre-translocation (PRE) complex, thus giving elongation factor G a second chance to translocate the tRNAs correctly. Binds to ribosomes in a GTP-dependent manner. The sequence is that of Elongation factor 4 from Rickettsia africae (strain ESF-5).